The sequence spans 305 residues: Acetylglutamate kinase (305 aa).

Residues 67–68 (GG), Arg89, and Asn190 each bind substrate.

It belongs to the acetylglutamate kinase family. ArgB subfamily.

The protein resides in the cytoplasm. The enzyme catalyses N-acetyl-L-glutamate + ATP = N-acetyl-L-glutamyl 5-phosphate + ADP. The protein operates within amino-acid biosynthesis; L-arginine biosynthesis; N(2)-acetyl-L-ornithine from L-glutamate: step 2/4. Catalyzes the ATP-dependent phosphorylation of N-acetyl-L-glutamate. This chain is Acetylglutamate kinase, found in Bifidobacterium longum (strain NCC 2705).